Here is a 372-residue protein sequence, read N- to C-terminus: Probable inactive receptor-like protein kinase At1g65250 (372 aa).

ATP-binding positions include 1–4 (MGWL) and Lys-38. The Protein kinase domain occupies 1–314 (MGWLRKKKKP…QERCQMKAFL (314 aa)). Phosphotyrosine is present on residues Tyr-128 and Tyr-221. Positions 348–372 (SSSLSSGQTQLDSAQDISSTVVLSN) are disordered. A compositionally biased stretch (polar residues) spans 354–372 (GQTQLDSAQDISSTVVLSN).

It belongs to the protein kinase superfamily.

The protein is Probable inactive receptor-like protein kinase At1g65250 of Arabidopsis thaliana (Mouse-ear cress).